The following is a 200-amino-acid chain: Serine/threonine-protein kinase mos (200 aa).

The region spanning 2–200 is the Protein kinase domain; it reads LCLLQPLGSG…ELLKGERVTA (199 aa). ATP is bound by residues 8–16 and Lys-29; that span reads LGSGGFGSV. Asp-143 serves as the catalytic Proton acceptor.

This sequence belongs to the protein kinase superfamily. Ser/Thr protein kinase family.

It catalyses the reaction L-seryl-[protein] + ATP = O-phospho-L-seryl-[protein] + ADP + H(+). The catalysed reaction is L-threonyl-[protein] + ATP = O-phospho-L-threonyl-[protein] + ADP + H(+). The polypeptide is Serine/threonine-protein kinase mos (MOS) (Apteryx australis (Southern brown kiwi)).